A 745-amino-acid polypeptide reads, in one-letter code: Probable endochitinase ARB_07371 (745 aa).

Residues methionine 1–alanine 23 form the signal peptide. The GH18 domain occupies threonine 30 to asparagine 351. Glutamate 178 serves as the catalytic Proton donor. Disordered stretches follow at residues asparagine 351–threonine 372 and tryptophan 395–isoleucine 446. The span at threonine 357–threonine 372 shows a compositional bias: low complexity. N-linked (GlcNAc...) asparagine glycosylation is found at asparagine 438 and asparagine 484. The tract at residues serine 651 to threonine 715 is disordered. Glycine 720 carries the GPI-anchor amidated glycine lipid modification. The propeptide at glycine 721–glutamine 745 is removed in mature form.

The protein belongs to the glycosyl hydrolase 18 family. Chitinase class III subfamily.

The protein localises to the cell membrane. It localises to the secreted. The protein resides in the cell wall. It carries out the reaction Random endo-hydrolysis of N-acetyl-beta-D-glucosaminide (1-&gt;4)-beta-linkages in chitin and chitodextrins.. Functionally, GPI-anchored chitinase involved in the degradation of chitin, a component of the cell walls of fungi and exoskeletal elements of some animals (including worms and arthropods). Required to reshape the cell wall at the sites where cell wall remodeling and/or cell wall maturation actively take place such as sites of conidia formation. In Arthroderma benhamiae (strain ATCC MYA-4681 / CBS 112371) (Trichophyton mentagrophytes), this protein is Probable endochitinase ARB_07371.